The primary structure comprises 536 residues: Berberine bridge enzyme-like 2 (536 aa).

Positions 1-20 are cleaved as a signal peptide; sequence MKIFCLILFLISSFISTSLA. Residues C35 and C98 are joined by a disulfide bond. Residues N38, N73, N136, N266, N334, and N352 are each glycosylated (N-linked (GlcNAc...) asparagine). The FAD-binding PCMH-type domain maps to 76–250; that stretch reads ATPKPAIVIA…LAFKIKLVPV (175 aa). The 6-(S-cysteinyl)-8alpha-(pros-histidyl)-FAD (His-Cys) cross-link spans 113-175; the sequence is HDYEGVSYIS…KSHGFPAGVC (63 aa).

This sequence belongs to the oxygen-dependent FAD-linked oxidoreductase family. It depends on FAD as a cofactor. Post-translationally, the FAD cofactor is bound via a bicovalent 6-S-cysteinyl, 8alpha-N1-histidyl FAD linkage.

Its subcellular location is the secreted. It localises to the cell wall. The polypeptide is Berberine bridge enzyme-like 2 (Arabidopsis thaliana (Mouse-ear cress)).